A 138-amino-acid polypeptide reads, in one-letter code: MRTLWIMAVLLVGVDGSLVQLWKMIFQETGKEAAKNYGLYGCNCGVGRRGKPKDATDSCCYVHKCCYKKVTGCNPKMDSYSYSWKNKAIVCGEKNPPCLKQVCECDKAVAICLRENLGTYNKKYTIYPKPFCKKADTC.

Positions Met1–Gly16 are cleaved as a signal peptide. Disulfide bonds link Cys42/Cys132, Cys44/Cys60, Cys59/Cys112, Cys65/Cys138, Cys66/Cys105, Cys73/Cys98, and Cys91/Cys103. The Ca(2+) site is built by Gly45 and Gly47. Residue His63 is part of the active site. Asp106 is a catalytic residue.

The protein belongs to the phospholipase A2 family. Group II subfamily. K49 sub-subfamily. As to quaternary structure, exists as a monomer in both solution and crystal states. In the presence of SDS or probably in the presence of phospholipids, assembles to form SDS-resistant stable oligomers. The cofactor is Ca(2+). Expressed by the venom gland.

It is found in the secreted. The catalysed reaction is a 1,2-diacyl-sn-glycero-3-phosphocholine + H2O = a 1-acyl-sn-glycero-3-phosphocholine + a fatty acid + H(+). In terms of biological role, snake venom phospholipase A2 (PLA2) that shows anticoagulant activities, strong myolytic activity, infiltration of polymorphonuclear cells, and edema in stromal tissues. Induces cell death of Jurkat cells in a concentration-dependent manner. Shows a low phospholipase A2 activity. PLA2 catalyzes the calcium-dependent hydrolysis of the 2-acyl groups in 3-sn-phosphoglycerides. The sequence is that of Basic phospholipase A2 BP-II from Protobothrops flavoviridis (Habu).